Consider the following 407-residue polypeptide: Homeobox even-skipped homolog protein 1 (407 aa).

Disordered regions lie at residues 29–120 (EAVG…SDFY) and 137–179 (EYQH…ACSA). Positions 102 to 114 (DSLSGQGQPSSSD) are enriched in polar residues. The segment at residues 183–242 (MRRYRTAFTREQIARLEKEFYRENYVSRPRRCELAAALNLPETTIKVWFQNRRMKDKRQR) is a DNA-binding region (homeobox).

The protein belongs to the even-skipped homeobox family.

The protein resides in the nucleus. In terms of biological role, may play a role in the specification of neuronal cell types. The protein is Homeobox even-skipped homolog protein 1 (EVX1) of Homo sapiens (Human).